Here is a 668-residue protein sequence, read N- to C-terminus: Probable serine/threonine-protein kinase abkB (668 aa).

2 disordered regions span residues 88 to 111 and 132 to 162; these read YTNI…KTTA and EVEE…DDNK. A compositionally biased stretch (polar residues) spans 91-105; it reads IGGTSPNRQSVPENS. Residues 131-163 are a coiled coil; the sequence is KEVEEEIIDKNERGKEQEQENKQQKEQKDDNKS. Positions 138–162 are enriched in basic and acidic residues; the sequence is IDKNERGKEQEQENKQQKEQKDDNK. Positions 314 to 668 constitute a Protein kinase domain; that stretch reads DFERLPINSA…EIPSTYHHHH (355 aa). ATP is bound by residues 320 to 328 and Lys346; that span reads INSASLAQV. Asp478 acts as the Proton acceptor in catalysis.

This sequence belongs to the protein kinase superfamily. ADCK protein kinase family.

The chain is Probable serine/threonine-protein kinase abkB (abkB) from Dictyostelium discoideum (Social amoeba).